The following is a 252-amino-acid chain: Bidirectional sugar transporter SWEET3b (252 aa).

Over 1–8 (MVSNTIRV) the chain is Extracellular. A helical transmembrane segment spans residues 9 to 29 (AVGILGNAASMLLYAAPILTF). The MtN3/slv 1 domain occupies 10–98 (VGILGNAASM…SIYTWFAPRE (89 aa)). Residues 30-43 (RRVIKKGSVEEFSC) are Cytoplasmic-facing. A helical membrane pass occupies residues 44–64 (VPYILALFNCLLYTWYGLPVV). At 65–75 (SSGWENSTVSS) the chain is on the extracellular side. A glycan (N-linked (GlcNAc...) asparagine) is linked at Asn-70. Residues 76–96 (INGLGILLEIAFISIYTWFAP) form a helical membrane-spanning segment. The Cytoplasmic portion of the chain corresponds to 97–105 (RERKKFVLR). The chain crosses the membrane as a helical span at residues 106–126 (MVLPVLAFFALTAIFSSFLFH). Over 127-132 (THGLRK) the chain is Extracellular. A helical transmembrane segment spans residues 133 to 153 (VFVGSIGLVASISMYSSPMVA). The MtN3/slv 2 domain maps to 134–219 (FVGSIGLVAS…LYCIYRKSHK (86 aa)). At 154-167 (AKQVITTKSVEFMP) the chain is on the cytoplasmic side. The chain crosses the membrane as a helical span at residues 168 to 188 (FYLSLFSFLSSALWMIYGLLG). Over 189 to 190 (KD) the chain is Extracellular. A helical membrane pass occupies residues 191–211 (LFIASPNFIGCPMGILQLVLY). Residues 212–252 (CIYRKSHKEAEKLHDIDQENGLKVVTTHEKITGREPEAQRD) lie on the Cytoplasmic side of the membrane.

The protein belongs to the SWEET sugar transporter family. Forms homooligomers and/or heterooligomers.

The protein resides in the cell membrane. In terms of biological role, mediates both low-affinity uptake and efflux of sugar across the plasma membrane. This Oryza sativa subsp. japonica (Rice) protein is Bidirectional sugar transporter SWEET3b (SWEET3B).